The primary structure comprises 160 residues: Protein-export protein SecB (160 aa).

The protein belongs to the SecB family. Homotetramer, a dimer of dimers. One homotetramer interacts with 1 SecA dimer.

Its subcellular location is the cytoplasm. One of the proteins required for the normal export of preproteins out of the cell cytoplasm. It is a molecular chaperone that binds to a subset of precursor proteins, maintaining them in a translocation-competent state. It also specifically binds to its receptor SecA. The polypeptide is Protein-export protein SecB (Burkholderia lata (strain ATCC 17760 / DSM 23089 / LMG 22485 / NCIMB 9086 / R18194 / 383)).